A 99-amino-acid chain; its full sequence is U1-theraphotoxin-Lsp1b (99 aa).

The first 23 residues, 1-23, serve as a signal peptide directing secretion; sequence MRSLTLAALLLCSLLLVFHTSAA. Positions 24 to 50 are excised as a propeptide; sequence EELQAQEGHLMIPGDTDTALETVDDER. 4 disulfides stabilise this stretch: Cys-54-Cys-67, Cys-58-Cys-91, Cys-72-Cys-74, and Cys-85-Cys-96.

This sequence belongs to the neurotoxin 12 (Hwtx-2) family. 04 (lasiotoxin) subfamily. Expressed by the venom gland.

The protein resides in the secreted. Toxin that causes irreversible contractile paralysis into adult Aedes aegypti resulting in 100% mortality after 24 hours. In Lasiodora sp. (strain IBSP 8539) (Brazilian salmon pink birdeater), this protein is U1-theraphotoxin-Lsp1b.